Consider the following 179-residue polypeptide: Sperm surface protein Sp17 (179 aa).

Residues 72-109 (HAFKDEPPEKSETQKIQPEKVAIEKETMPQETVKEKET) show a composition bias toward basic and acidic residues. 2 disordered regions span residues 72–138 (HAFK…EGLL) and 159–179 (TRKE…ENNE). Acidic residues predominate over residues 116–135 (EPTEEPQKEEEEEEDEEDLE). Residues 143 to 172 (MQDAAVKIQAVFRGHKTRKEYLKKRDSTDE) enclose the IQ domain. Positions 161 to 170 (KEYLKKRDST) are enriched in basic and acidic residues.

Homodimer. May interact with ROPN1. In terms of tissue distribution, testis- and sperm-specific.

It is found in the membrane. Its function is as follows. Sperm surface zona pellucida binding protein. Helps to bind spermatozoa to the zona pellucida with high affinity. Might function in binding zona pellucida and carbohydrates. This chain is Sperm surface protein Sp17 (SPA17), found in Monodelphis domestica (Gray short-tailed opossum).